The chain runs to 380 residues: Putative 8-amino-7-oxononanoate synthase (380 aa).

Arginine 18 contacts substrate. 106–107 is a pyridoxal 5'-phosphate binding site; it reads GY. Histidine 131 serves as a coordination point for substrate. Residues serine 179, 205–208, and 236–239 each bind pyridoxal 5'-phosphate; these read DEAH and TFGK. At lysine 239 the chain carries N6-(pyridoxal phosphate)lysine. Residue threonine 352 participates in substrate binding.

This sequence belongs to the class-II pyridoxal-phosphate-dependent aminotransferase family. BioF subfamily. As to quaternary structure, homodimer. Pyridoxal 5'-phosphate serves as cofactor.

The catalysed reaction is 6-carboxyhexanoyl-[ACP] + L-alanine + H(+) = (8S)-8-amino-7-oxononanoate + holo-[ACP] + CO2. It participates in cofactor biosynthesis; biotin biosynthesis. Functionally, catalyzes the decarboxylative condensation of pimeloyl-[acyl-carrier protein] and L-alanine to produce 8-amino-7-oxononanoate (AON), [acyl-carrier protein], and carbon dioxide. The chain is Putative 8-amino-7-oxononanoate synthase (bioF) from Neisseria gonorrhoeae (strain ATCC 700825 / FA 1090).